Consider the following 464-residue polypeptide: Ubiquinone biosynthesis monooxygenase COQ6, mitochondrial (464 aa).

The transit peptide at 1–24 (MRCLGGSSLSRLLRMLSQSQGRAL) directs the protein to the mitochondrion.

The protein belongs to the UbiH/COQ6 family. As to quaternary structure, component of a multi-subunit COQ enzyme complex, composed of at least coq3, coq4, coq5, coq6, coq7 and coq9. Interacts with coq8b and coq7. FAD is required as a cofactor.

It localises to the mitochondrion inner membrane. It is found in the golgi apparatus. The protein resides in the cell projection. It catalyses the reaction a 4-hydroxy-3-(all-trans-polyprenyl)benzoate + 2 reduced [2Fe-2S]-[ferredoxin] + O2 + 2 H(+) = a 3,4-dihydroxy-5-(all-trans-polyprenyl)benzoate + 2 oxidized [2Fe-2S]-[ferredoxin] + H2O. The enzyme catalyses a 2-methoxy-6-(all-trans-polyprenyl)phenol + 2 reduced [2Fe-2S]-[ferredoxin] + O2 + 2 H(+) = a 2-methoxy-6-(all-trans-polyprenyl)benzene-1,4-diol + 2 oxidized [2Fe-2S]-[ferredoxin] + H2O. The protein operates within cofactor biosynthesis; ubiquinone biosynthesis. In terms of biological role, FAD-dependent monooxygenase required for two non-consecutive steps during ubiquinone biosynthesis. Required for the C5-ring hydroxylation during ubiquinone biosynthesis by catalyzing the hydroxylation of 4-hydroxy-3-(all-trans-polyprenyl)benzoic acid to 3,4-dihydroxy-5-(all-trans-polyprenyl)benzoic acid. Also acts downstream of coq4, for the C1-hydroxylation during ubiquinone biosynthesis by catalyzing the hydroxylation of 2-methoxy-6-(all-trans-polyprenyl)phenol to 2-methoxy-6-(all-trans-polyprenyl)benzene-1,4-diol. The electrons required for the hydroxylation reaction are funneled indirectly to coq6 from NADPH via a ferredoxin/ferredoxin reductase system. In Xenopus tropicalis (Western clawed frog), this protein is Ubiquinone biosynthesis monooxygenase COQ6, mitochondrial.